We begin with the raw amino-acid sequence, 381 residues long: ADP,ATP carrier protein 1, mitochondrial (381 aa).

Residues 1–70 constitute a mitochondrion transit peptide; that stretch reads MVDQVQHPTI…ATTASPVFVQ (70 aa). Solcar repeat units follow at residues 78-171, 183-276, and 284-370; these read TNFA…FKRL, KWFA…VKPV, and DSFF…LQLI. 5 helical membrane passes run 80 to 107, 148 to 172, 181 to 201, 252 to 273, and 287 to 307; these read FALD…VKLL, TANV…KRLF, YWKW…SSLL, FNIS…YDSV, and FASF…SYPI. ADP contacts are provided by Arg-153 and Lys-165. Arg-311 is an ADP binding site. An important for transport activity region spans residues 311 to 316; that stretch reads RRRMMM. Positions 311 to 316 match the Nucleotide carrier signature motif motif; the sequence is RRRMMM. A helical transmembrane segment spans residues 347–367; sequence AGANILRAVAGAGVLSGYDKL.

This sequence belongs to the mitochondrial carrier (TC 2.A.29) family. Monomer.

It is found in the mitochondrion inner membrane. The catalysed reaction is ADP(in) + ATP(out) = ADP(out) + ATP(in). Its activity is regulated as follows. The matrix-open state (m-state) is inhibited by the membrane-permeable bongkrekic acid (BKA). The cytoplasmic-open state (c-state) is inhibited by the membrane-impermeable toxic inhibitor carboxyatractyloside (CATR). In terms of biological role, ADP:ATP antiporter that mediates import of ADP into the mitochondrial matrix for ATP synthesis, and export of ATP out to fuel the cell. Cycles between the cytoplasmic-open state (c-state) and the matrix-open state (m-state): operates by the alternating access mechanism with a single substrate-binding site intermittently exposed to either the cytosolic (c-state) or matrix (m-state) side of the inner mitochondrial membrane. The protein is ADP,ATP carrier protein 1, mitochondrial (AAC1) of Arabidopsis thaliana (Mouse-ear cress).